The sequence spans 315 residues: MSESLRIIFAGTPDFAARHLDALLSSGHNVVGVFTQPDRPAGRGKKLMPSPVKVLAEEKALPVFQPVSLRPQENQQLVADLQADVMVVVAYGLILPKAVLEMPRLGCINVHGSLLPRWRGAAPIQRSLWAGDAETGVTIMQMDVGLDTGDMLYKLSCPITAEDTSGTLYDKLAELGPQGLITTLKQLADGTAKPEVQDETLVTYAEKLSKEEARIDWSLSAAQLERCIRAFNPWPMSWLEIEGQPVKVWKASVIDTATNAAPGTILEANKQGIQVATGDGILNLLSLQPAGKKAMSAQDLLNSRREWFVPGNRLV.

113-116 (SLLP) is a binding site for (6S)-5,6,7,8-tetrahydrofolate.

The protein belongs to the Fmt family.

The enzyme catalyses L-methionyl-tRNA(fMet) + (6R)-10-formyltetrahydrofolate = N-formyl-L-methionyl-tRNA(fMet) + (6S)-5,6,7,8-tetrahydrofolate + H(+). Attaches a formyl group to the free amino group of methionyl-tRNA(fMet). The formyl group appears to play a dual role in the initiator identity of N-formylmethionyl-tRNA by promoting its recognition by IF2 and preventing the misappropriation of this tRNA by the elongation apparatus. The polypeptide is Methionyl-tRNA formyltransferase (Escherichia coli O17:K52:H18 (strain UMN026 / ExPEC)).